Here is a 108-residue protein sequence, read N- to C-terminus: uncharacterized protein (108 aa).

This is an uncharacterized protein from Mycoplasma pneumoniae (strain ATCC 29342 / M129 / Subtype 1) (Mycoplasmoides pneumoniae).